The chain runs to 367 residues: Farnesyl pyrophosphate synthase (367 aa).

Isopentenyl diphosphate contacts are provided by Lys71, Arg74, and Gln110. The Mg(2+) site is built by Asp117 and Asp121. Dimethylallyl diphosphate is bound at residue Arg126. Arg127 contributes to the isopentenyl diphosphate binding site. Residues Lys214, Thr215, Gln254, Lys271, and Lys280 each contribute to the dimethylallyl diphosphate site.

Belongs to the FPP/GGPP synthase family. In terms of assembly, homodimer. Requires Mg(2+) as cofactor.

The protein localises to the cytoplasm. The catalysed reaction is isopentenyl diphosphate + dimethylallyl diphosphate = (2E)-geranyl diphosphate + diphosphate. It catalyses the reaction isopentenyl diphosphate + (2E)-geranyl diphosphate = (2E,6E)-farnesyl diphosphate + diphosphate. It functions in the pathway isoprenoid biosynthesis; farnesyl diphosphate biosynthesis; farnesyl diphosphate from geranyl diphosphate and isopentenyl diphosphate: step 1/1. The protein operates within isoprenoid biosynthesis; geranyl diphosphate biosynthesis; geranyl diphosphate from dimethylallyl diphosphate and isopentenyl diphosphate: step 1/1. Its function is as follows. Catalyzes the sequential condensation of isopentenyl pyrophosphate with the allylic pyrophosphates, dimethylallyl pyrophosphate, and then with the resultant geranylpyrophosphate to the ultimate product farnesyl pyrophosphate. The sequence is that of Farnesyl pyrophosphate synthase (FDPS) from Gallus gallus (Chicken).